Reading from the N-terminus, the 245-residue chain is Zinc finger CCCH domain-containing protein 54 (245 aa).

Residues 92 to 119 (TYCAVACPAFRNGACHRGDSCEFAHGVF) form a C3H1-type zinc finger. Residues 175–204 (GNGDGVTMRMDDEGYDTSRSPVRSGKDDLD) form a disordered region.

In terms of assembly, interacts with MARD1/FLZ9 and RD21A. In terms of tissue distribution, specifically expressed in embryo (at protein level).

It is found in the nucleus. Functionally, embryo-specific transcription factor required at the globular to heart stage transition in embryo development. The protein is Zinc finger CCCH domain-containing protein 54 of Arabidopsis thaliana (Mouse-ear cress).